We begin with the raw amino-acid sequence, 491 residues long: Ran-binding protein 3 (491 aa).

Positions 1–10 (MADLANEEKP) are enriched in basic and acidic residues. Disordered stretches follow at residues 1–177 (MADL…HCEE) and 255–292 (VLSP…KKES). A2 carries the N-acetylalanine modification. N6-acetyllysine occurs at positions 9 and 21. A phosphoserine mark is found at S32, S33, and S40. Positions 49 to 57 (PPVKRERTS) match the Nuclear localization signal motif. Over residues 51-67 (VKRERTSSLTHSEEKSS) the composition is skewed to basic and acidic residues. The residue at position 56 (T56) is a Phosphothreonine. S58 is subject to Phosphoserine. 2 stretches are compositionally biased toward polar residues: residues 111-124 (VLSQ…TNGV) and 133-149 (PATS…SPSE). At S146 the chain carries Phosphoserine. Residues 152-162 (EETHTLEEKVP) show a composition bias toward basic and acidic residues. S257, S277, S279, and S296 each carry phosphoserine. Over residues 275 to 286 (AQSGSESSSQEA) the composition is skewed to low complexity. The 141-residue stretch at 302–442 (KATAWTCLLE…LALRSRAEQE (141 aa)) folds into the RanBD1 domain. The tract at residues 438–491 (RAEQEQEAKAPPPEPGATRATEEEDSDEDAVLAPSGVTGAGTGDEGDGQAPGST) is disordered. S463 bears the Phosphoserine mark.

In terms of assembly, interacts with CHC1 in a Ran-stimulated manner. Interacts with XPO1. Interacts (via its C-terminal R domain) with SMAD2 (dephosphorylated form via its MH1 and MH2 domains); the interaction results in the nuclear export of SMAD2 and termination of the TGF-beta signaling. Interacts (via its C-terminal R domain) with SMAD3 (dephosphorylated form via its MH1 domain); the interaction results in the nuclear export of SMAD3 and termination of the TGF-beta signaling. In terms of processing, phosphorylation at Ser-58 promotes its import into the nucleus.

The protein resides in the cytoplasm. It is found in the nucleus. Acts as a cofactor for XPO1/CRM1-mediated nuclear export, perhaps as export complex scaffolding protein. Bound to XPO1/CRM1, stabilizes the XPO1/CRM1-cargo interaction. In the absence of Ran-bound GTP prevents binding of XPO1/CRM1 to the nuclear pore complex. Binds to CHC1/RCC1 and increases the guanine nucleotide exchange activity of CHC1/RCC1. Recruits XPO1/CRM1 to CHC1/RCC1 in a Ran-dependent manner. Negative regulator of TGF-beta signaling through interaction with the R-SMAD proteins, SMAD2 and SMAD3, and mediating their nuclear export. The polypeptide is Ran-binding protein 3 (Ranbp3) (Mus musculus (Mouse)).